The chain runs to 147 residues: Hemoglobin subunit beta (147 aa).

The Globin domain occupies 3–147; the sequence is HWTAEEKQLI…VAHALARKYH (145 aa). Heme b contacts are provided by histidine 64 and histidine 93.

The protein belongs to the globin family. As to quaternary structure, heterotetramer of 2 alpha (or alpha-D) and 2 beta chains. In terms of tissue distribution, red blood cells.

Involved in oxygen transport from the lung to the various peripheral tissues. The beta chain is a component of adult hemoglobin A and D. This chain is Hemoglobin subunit beta (HBB), found in Gallus gallus (Chicken).